The following is a 155-amino-acid chain: Riboflavin synthase (155 aa).

Belongs to the DMRL synthase family.

It carries out the reaction 2 6,7-dimethyl-8-(1-D-ribityl)lumazine + H(+) = 5-amino-6-(D-ribitylamino)uracil + riboflavin. It functions in the pathway cofactor biosynthesis; riboflavin biosynthesis; riboflavin from 2-hydroxy-3-oxobutyl phosphate and 5-amino-6-(D-ribitylamino)uracil: step 2/2. This Aeropyrum pernix (strain ATCC 700893 / DSM 11879 / JCM 9820 / NBRC 100138 / K1) protein is Riboflavin synthase (ribC).